The sequence spans 1226 residues: Arf guanine nucleotide exchange factor SYT1 (1226 aa).

Disordered regions lie at residues 17–39 and 113–158; these read HSND…DKLR and RNGQ…RNSK. Over residues 131-142 the composition is skewed to basic and acidic residues; the sequence is SIEKVPKPDGER. Threonine 277 bears the Phosphothreonine mark. Disordered stretches follow at residues 311 to 405, 954 to 1022, and 1178 to 1198; these read NSLM…TGMS, STGS…NEDY, and LEHG…DGID. Residues 349-360 are compositionally biased toward polar residues; sequence LSRSRSQSTSFV. Serine 369 is subject to Phosphoserine. Positions 386-405 are enriched in polar residues; sequence GPTSVYNNKSNANSTITGMS. The SEC7 domain occupies 405 to 620; it reads SRRSSSIVNA…TYFYENVTAK (216 aa). Residues 844 to 1074 form the PH domain; sequence ILQMGAIMNL…DSINLFSAYD (231 aa). Low complexity-rich tracts occupy residues 956–969 and 994–1017; these read GSHT…SSSA and SSVS…SSND.

The protein localises to the cytoplasm. Inhibited by brefeldin A. In terms of biological role, guanine nucleotide exchange factor for Arf GTPases, stimulating the nucleotide exchange from the GDP-bound to the GTP-bound form. Catalyzes both the GDP release by and the GTP binding to ARF2. Has no exchange activity on Rab GTPases. Involved in vesicular transport. This is Arf guanine nucleotide exchange factor SYT1 (SYT1) from Saccharomyces cerevisiae (strain ATCC 204508 / S288c) (Baker's yeast).